Reading from the N-terminus, the 411-residue chain is Histone-lysine N-methyltransferase SUV39H1-A (411 aa).

The Chromo domain maps to 43-101; it reads YEVEYLCNYKKHKGREFFLVKWKGYEESENTWEPLKNLKCPILLHQFRKDMKAALLQAN. In terms of domain architecture, Pre-SET spans 178–239; sequence VGCECEDCVS…DCANRVVQRG (62 aa). Residues Cys180, Cys182, Cys185, Cys193, Cys194, Cys221, Cys225, Cys227, and Cys231 each contribute to the Zn(2+) site. Residues 242–365 enclose the SET domain; it reads YDLCIFKTDN…AGEELTFDYK (124 aa). S-adenosyl-L-methionine-binding positions include 253–255, Tyr296, and 322–323; these read RGW and NH. The Zn(2+) site is built by Cys325, Cys399, Cys401, and Cys406. The region spanning 395 to 411 is the Post-SET domain; that stretch reads VHMECKCGVRNCRKYLF.

This sequence belongs to the class V-like SAM-binding methyltransferase superfamily. Histone-lysine methyltransferase family. Suvar3-9 subfamily. In terms of tissue distribution, expressed ubuitiously.

Its subcellular location is the nucleus. It localises to the chromosome. The protein localises to the centromere. The enzyme catalyses N(6)-methyl-L-lysyl(9)-[histone H3] + S-adenosyl-L-methionine = N(6),N(6)-dimethyl-L-lysyl(9)-[histone H3] + S-adenosyl-L-homocysteine + H(+). The catalysed reaction is N(6),N(6)-dimethyl-L-lysyl(9)-[histone H3] + S-adenosyl-L-methionine = N(6),N(6),N(6)-trimethyl-L-lysyl(9)-[histone H3] + S-adenosyl-L-homocysteine + H(+). Histone methyltransferase that specifically trimethylates 'Lys-9' of histone H3 using monomethylated H3 'Lys-9' as substrate. H3 'Lys-9' trimethylation represents a specific tag for epigenetic transcriptional repression by recruiting HP1 (CBX1, CBX3 and/or CBX5) proteins to methylated histones. Mainly functions in heterochromatin regions, thereby playing a central role in the establishment of constitutive heterochromatin at pericentric and telomere regions. H3 'Lys-9' trimethylation is also required to direct DNA methylation at pericentric repeats. SUV39H1 is targeted to histone H3 via its interaction with RB1 and is involved in many processes, such as regulation of organ-specific terminal differentiation during development. The sequence is that of Histone-lysine N-methyltransferase SUV39H1-A (suv39h1a) from Danio rerio (Zebrafish).